We begin with the raw amino-acid sequence, 378 residues long: Odorant receptor 33a (378 aa).

Residues 1–33 are Cytoplasmic-facing; sequence MDSRRKVRSENLYKTYWLYWRLLGVEGDYPFRR. The helical transmembrane segment at 34–54 threads the bilayer; it reads LVDFTITSFITILFPVHLILG. Residues 55–62 lie on the Extracellular side of the membrane; that stretch reads MYKKPQIQ. A helical membrane pass occupies residues 63–83; sequence VFRSLHFTSECLFCSYKFFCF. The Cytoplasmic portion of the chain corresponds to 84–127; the sequence is RWKLKEIKTIEGLLQDLDSRVESEEERNYFNQNPSRVARMLSKS. A helical membrane pass occupies residues 128 to 148; that stretch reads YLVAAISAIITATVAGLFSTG. Topologically, residues 149–163 are extracellular; the sequence is RNLMYLGWFPYDFQA. Residues 164–184 form a helical membrane-spanning segment; it reads TAAIYWISFSYQAIGSSLLIL. The Cytoplasmic portion of the chain corresponds to 185–254; that stretch reads ENLANDSYPP…LLRSTLHLSQ (70 aa). Residues 255–275 traverse the membrane as a helical segment; sequence LGQFLSSGINISITLINILFF. Residues 276-285 lie on the Extracellular side of the membrane; it reads AENNFAMLYY. Residues 286–306 form a helical membrane-spanning segment; it reads AVFFAAMLIELFPSCYYGILM. The Cytoplasmic segment spans residues 307-355; the sequence is TMEFDKLPYAIFSSNWLKMDKRYNRSLIILMQLTLVPVNIKAGGIVGID. The helical transmembrane segment at 356–376 threads the bilayer; sequence MSAFFATVRMAYSFYTLALSF. Residues 377–378 are Extracellular-facing; that stretch reads RV.

The protein belongs to the insect chemoreceptor superfamily. Heteromeric odorant receptor channel (TC 1.A.69) family. Or2a subfamily. In terms of assembly, interacts with Orco. Complexes exist early in the endomembrane system in olfactory sensory neurons (OSNs), coupling these complexes to the conserved ciliary trafficking pathway. Expressed in 1-2 cells on the distal edge of the antenna but not the maxillary palp.

Its subcellular location is the cell membrane. In terms of biological role, odorant receptor which mediates acceptance or avoidance behavior, depending on its substrates. The odorant receptor repertoire encodes a large collection of odor stimuli that vary widely in identity, intensity, and duration. May form a complex with Orco to form odorant-sensing units, providing sensitive and prolonged odorant signaling and calcium permeability. The polypeptide is Odorant receptor 33a (Or33a) (Drosophila melanogaster (Fruit fly)).